A 492-amino-acid chain; its full sequence is E3 ubiquitin-protein ligase XIAP (492 aa).

3 BIR repeats span residues 40-105, 172-237, and 271-334; these read RLAS…KFIN, RLQT…YFVL, and RLET…KFLI. The Zn(2+) site is built by Cys-303, Cys-306, His-323, and Cys-330. The RING-type zinc finger occupies 445-480; it reads CKVCMDRRISIVFIPCGHLVACAVCADVLDKCPICC.

Belongs to the IAP family. As to quaternary structure, monomer, and homodimer. In terms of processing, degraded in a 2-step mechanism; a caspase-independent first step and a caspase-dependent second step. Stabilized indirectly by MAPK, which acts to delay caspase activation, rather than directly phosphorylating xiap.

It localises to the cytoplasm. It catalyses the reaction S-ubiquitinyl-[E2 ubiquitin-conjugating enzyme]-L-cysteine + [acceptor protein]-L-lysine = [E2 ubiquitin-conjugating enzyme]-L-cysteine + N(6)-ubiquitinyl-[acceptor protein]-L-lysine.. In terms of biological role, multi-functional protein which regulates not only caspases and apoptosis, but also acts as an E3 ubiquitin-protein ligase mediating ubiquitination and subsequent proteasomal degradation of its target proteins. Acts as a direct caspase inhibitor. E3 ubiquitin-protein ligase that acts as an important regulator of innate immunity by mediating 'Lys-63'-linked polyubiquitination of ripk2 downstream of NOD1 and NOD2, thereby transforming ripk2 into a scaffolding protein for downstream effectors, ultimately leading to activation of the NF-kappa-B and MAP kinases signaling. A key apoptotic suppressor in eggs. Acts as a positive regulator of Wnt signaling. This Xenopus tropicalis (Western clawed frog) protein is E3 ubiquitin-protein ligase XIAP (xiap).